The sequence spans 311 residues: 4-hydroxy-tetrahydrodipicolinate synthase (311 aa).

Thr51 contacts pyruvate. Tyr140 serves as the catalytic Proton donor/acceptor. Lys168 (schiff-base intermediate with substrate) is an active-site residue. Ile209 lines the pyruvate pocket.

This sequence belongs to the DapA family. Homotetramer; dimer of dimers.

The protein resides in the cytoplasm. The catalysed reaction is L-aspartate 4-semialdehyde + pyruvate = (2S,4S)-4-hydroxy-2,3,4,5-tetrahydrodipicolinate + H2O + H(+). Its pathway is amino-acid biosynthesis; L-lysine biosynthesis via DAP pathway; (S)-tetrahydrodipicolinate from L-aspartate: step 3/4. Catalyzes the condensation of (S)-aspartate-beta-semialdehyde [(S)-ASA] and pyruvate to 4-hydroxy-tetrahydrodipicolinate (HTPA). In Streptococcus pneumoniae (strain ATCC BAA-255 / R6), this protein is 4-hydroxy-tetrahydrodipicolinate synthase.